Here is a 419-residue protein sequence, read N- to C-terminus: L-rhamnose isomerase (419 aa).

Mn(2+)-binding residues include His-262, Asp-294, and Asp-296.

Belongs to the rhamnose isomerase family. In terms of assembly, homotetramer. Mn(2+) serves as cofactor.

It localises to the cytoplasm. It catalyses the reaction L-rhamnopyranose = L-rhamnulose. Its pathway is carbohydrate degradation; L-rhamnose degradation; glycerone phosphate from L-rhamnose: step 1/3. Catalyzes the interconversion of L-rhamnose and L-rhamnulose. The polypeptide is L-rhamnose isomerase (Escherichia coli O81 (strain ED1a)).